Here is a 440-residue protein sequence, read N- to C-terminus: Ribosomal protein uS12 methylthiotransferase RimO (440 aa).

One can recognise an MTTase N-terminal domain in the interval 8-125 (LRCHAISLGC…WNEQILLALN (118 aa)). The [4Fe-4S] cluster site is built by cysteine 17, cysteine 52, cysteine 87, cysteine 152, cysteine 156, and cysteine 159. The region spanning 138–368 (TTGKSYAWLK…MEIQLKISEK (231 aa)) is the Radical SAM core domain. In terms of domain architecture, TRAM spans 371–439 (KNFVGKRLSL…SYDLVALADS (69 aa)).

The protein belongs to the methylthiotransferase family. RimO subfamily. It depends on [4Fe-4S] cluster as a cofactor.

The protein localises to the cytoplasm. It catalyses the reaction L-aspartate(89)-[ribosomal protein uS12]-hydrogen + (sulfur carrier)-SH + AH2 + 2 S-adenosyl-L-methionine = 3-methylsulfanyl-L-aspartate(89)-[ribosomal protein uS12]-hydrogen + (sulfur carrier)-H + 5'-deoxyadenosine + L-methionine + A + S-adenosyl-L-homocysteine + 2 H(+). Functionally, catalyzes the methylthiolation of an aspartic acid residue of ribosomal protein uS12. The chain is Ribosomal protein uS12 methylthiotransferase RimO from Lawsonia intracellularis (strain PHE/MN1-00).